The chain runs to 431 residues: Glutamate-1-semialdehyde 2,1-aminomutase (431 aa).

An N6-(pyridoxal phosphate)lysine modification is found at lysine 265.

This sequence belongs to the class-III pyridoxal-phosphate-dependent aminotransferase family. HemL subfamily. As to quaternary structure, homodimer. Requires pyridoxal 5'-phosphate as cofactor.

The protein resides in the cytoplasm. The enzyme catalyses (S)-4-amino-5-oxopentanoate = 5-aminolevulinate. It participates in porphyrin-containing compound metabolism; protoporphyrin-IX biosynthesis; 5-aminolevulinate from L-glutamyl-tRNA(Glu): step 2/2. This is Glutamate-1-semialdehyde 2,1-aminomutase from Aliivibrio salmonicida (strain LFI1238) (Vibrio salmonicida (strain LFI1238)).